Here is a 900-residue protein sequence, read N- to C-terminus: Alanine--tRNA ligase (900 aa).

The Zn(2+) site is built by His-568, His-572, Cys-672, and His-676.

This sequence belongs to the class-II aminoacyl-tRNA synthetase family. Zn(2+) serves as cofactor.

It localises to the cytoplasm. The catalysed reaction is tRNA(Ala) + L-alanine + ATP = L-alanyl-tRNA(Ala) + AMP + diphosphate. In terms of biological role, catalyzes the attachment of alanine to tRNA(Ala) in a two-step reaction: alanine is first activated by ATP to form Ala-AMP and then transferred to the acceptor end of tRNA(Ala). Also edits incorrectly charged Ser-tRNA(Ala) and Gly-tRNA(Ala) via its editing domain. This is Alanine--tRNA ligase from Mycoplasma genitalium (strain ATCC 33530 / DSM 19775 / NCTC 10195 / G37) (Mycoplasmoides genitalium).